The chain runs to 271 residues: Short chain dehydrogenase asqE (271 aa).

NADP(+)-binding residues include isoleucine 22, aspartate 70, and asparagine 99. Residues serine 152 and serine 153 each act as proton donor in the active site. Tyrosine 167, lysine 171, and threonine 203 together coordinate NADP(+). Tyrosine 167 functions as the Proton acceptor in the catalytic mechanism. The Lowers pKa of active site Tyr role is filled by lysine 171.

Belongs to the short-chain dehydrogenases/reductases (SDR) family.

The enzyme catalyses a primary alcohol + NAD(+) = an aldehyde + NADH + H(+). The catalysed reaction is a secondary alcohol + NAD(+) = a ketone + NADH + H(+). Its pathway is secondary metabolite biosynthesis. The protein operates within alkaloid biosynthesis. It functions in the pathway mycotoxin biosynthesis. Short chain dehydrogenase; part of the gene cluster that mediates the biosynthesis of the aspoquinolone mycotoxins. The role of asqE within the aspoquinolone pathway has still to be determined. The first step of the pathway is catalyzed by the nonribosomal peptide synthetase asqK that condenses anthranilic acid and O-methyl-L-tyrosine to produce 4'-methoxycyclopeptin. 4'-methoxycyclopeptin is then converted to 4'-methoxydehydrocyclopeptin by the ketoglutarate-dependent dioxygenase asqJ. AsqJ also converts its first product 4'-methoxydehydrocyclopeptin to 4'-methoxycyclopenin. The following conversion of 4'-methoxycyclopenin into 4'-methoxyviridicatin is catalyzed by the cyclopenase asqI. 4'-methoxyviridicatin is the precursor of quinolone natural products, and is further converted to quinolinone B. The prenyltransferase asqH1 then catalyzes the canonical Friedel-Crafts alkylation of quinolinone B with dimethylallyl cation to yield dimethylallyl quinolone, which is subjected to FAD-dependent dehydrogenation by the FAD-linked oxidoreductase asqF to yield conjugated aryl diene. The delta(3') double bond then serves as the site of the second alkylation with DMAPP catalyzed by the prenyltransferase asqH2 to yield a carbenium ion intermediate, which can be attacked by H(2)O to yield a styrenyl quinolone containing a C3'-hydroxyprenyl chain. The FAD-dependent monooxygenase asqG performs epoxidation of the terminal C7'-C8' olefin. Finally, after dehydratation of the epoxide at C3 by asqC, the quinolone epoxide rearrangement protein asqO catalyzes an enzymatic 3-exo-tet cyclization to yield the cyclopropyl-THF ring system in aspoquinolone. This is Short chain dehydrogenase asqE from Emericella nidulans (strain FGSC A4 / ATCC 38163 / CBS 112.46 / NRRL 194 / M139) (Aspergillus nidulans).